The primary structure comprises 520 residues: Cholesterol side-chain cleavage enzyme, mitochondrial (520 aa).

Residues 1 to 39 (MLARGLPFRSALVKACPPLLNTGREGWGHHRVGTGEGAG) constitute a mitochondrion transit peptide. Positions 27 to 47 (WGHHRVGTGEGAGISTRTPRP) are disordered. Cysteine 461 contacts heme.

Belongs to the cytochrome P450 family. Interacts with FDX1/adrenodoxin. The cofactor is heme.

The protein resides in the mitochondrion inner membrane. The enzyme catalyses 6 reduced [adrenodoxin] + cholesterol + 3 O2 + 6 H(+) = 4-methylpentanal + pregnenolone + 6 oxidized [adrenodoxin] + 4 H2O. The catalysed reaction is 2 reduced [adrenodoxin] + cholesterol + O2 + 2 H(+) = (22R)-hydroxycholesterol + 2 oxidized [adrenodoxin] + H2O. It catalyses the reaction (22R)-hydroxycholesterol + 2 reduced [adrenodoxin] + O2 + 2 H(+) = (20R,22R)-20,22-dihydroxycholesterol + 2 oxidized [adrenodoxin] + H2O. It carries out the reaction (20R,22R)-20,22-dihydroxycholesterol + 2 reduced [adrenodoxin] + O2 + 2 H(+) = 4-methylpentanal + pregnenolone + 2 oxidized [adrenodoxin] + 2 H2O. The protein operates within lipid metabolism; C21-steroid hormone metabolism. Its pathway is steroid metabolism; cholesterol metabolism. Its function is as follows. A cytochrome P450 monooxygenase that catalyzes the side-chain hydroxylation and cleavage of cholesterol to pregnenolone, the precursor of most steroid hormones. Catalyzes three sequential oxidation reactions of cholesterol, namely the hydroxylation at C22 followed with the hydroxylation at C20 to yield 20R,22R-hydroxycholesterol that is further cleaved between C20 and C22 to yield the C21-steroid pregnenolone and 4-methylpentanal. Mechanistically, uses molecular oxygen inserting one oxygen atom into a substrate and reducing the second into a water molecule. Two electrons are provided by NADPH via a two-protein mitochondrial transfer system comprising flavoprotein FDXR (adrenodoxin/ferredoxin reductase) and nonheme iron-sulfur protein FDX1 or FDX2 (adrenodoxin/ferredoxin). This Ovis aries (Sheep) protein is Cholesterol side-chain cleavage enzyme, mitochondrial.